Reading from the N-terminus, the 346-residue chain is Protein U59 (346 aa).

It belongs to the herpesviridae U59/UL88 family.

This chain is Protein U59, found in Elephantid herpesvirus 1 (isolate Asian elephant/Berlin/Kiba/1998) (EIHV-1).